Here is a 257-residue protein sequence, read N- to C-terminus: Phosphate import ATP-binding protein PstB (257 aa).

One can recognise an ABC transporter domain in the interval 4 to 246 (LKLNDVNIYY…KKIFENPDQK (243 aa)). 36–43 (GPSGCGKS) contributes to the ATP binding site.

The protein belongs to the ABC transporter superfamily. Phosphate importer (TC 3.A.1.7) family. In terms of assembly, the complex is composed of two ATP-binding proteins (PstB), two transmembrane proteins (PstC and PstA) and a solute-binding protein (PstS).

The protein resides in the cell membrane. It carries out the reaction phosphate(out) + ATP + H2O = ADP + 2 phosphate(in) + H(+). Functionally, part of the ABC transporter complex PstSACB involved in phosphate import. Responsible for energy coupling to the transport system. This chain is Phosphate import ATP-binding protein PstB, found in Corynebacterium glutamicum (strain ATCC 13032 / DSM 20300 / JCM 1318 / BCRC 11384 / CCUG 27702 / LMG 3730 / NBRC 12168 / NCIMB 10025 / NRRL B-2784 / 534).